The sequence spans 375 residues: Terpene cyclase braA (375 aa).

Mg(2+) contacts are provided by D116, N264, and S268. Residues 116–120 (DDEID) carry the D(D/E)XX(D/E) motif motif. An NSE motif motif is present at residues 264–272 (NDVLSLQKE). Residues 348 to 355 (WSYSCERY) carry the WxxxxxRY motif motif. R354 and Y355 together coordinate (2E,6E)-farnesyl diphosphate.

The protein belongs to the terpene synthase family. Homodimer. Requires Mg(2+) as cofactor.

It catalyses the reaction (2E,6E)-farnesyl diphosphate + H2O = trichobrasilenol + diphosphate. Its pathway is secondary metabolite biosynthesis. In terms of biological role, terpene cyclase; part of the gene cluster that mediates the biosynthesis of the brasilane terpene glycosides brasilane D and E. The biosynthesis starts with the activity of the terpene cyclase braA that converts farnesyl pyrophosphate into the sesquiterpene alcohol trichobrasilenol. Subsequently, trichobrasilenol is glycosylated by the O-glycosyltransferase braB putatively using UDP-GlcNAc as sugar donor to yield brasilane A. The latter then undergoes two rounds of oxidation performed by the cytochrome P450 monooxygenase braC. In the first round braC hydroxylates C-12 forming brasilane D, which serves as substrate in the second round to establish the epoxide at the bond between C-5 and C-10 and oxidize the alcohol at C-12 to an aldehyde leading to the final product brasilane E. The sequence is that of Terpene cyclase braA from Annulohypoxylon truncatum (Hypoxylon truncatum).